Consider the following 274-residue polypeptide: 23S rRNA (adenosine(1067)-2'-O)-methyltransferase (274 aa).

S-adenosyl-L-methionine is bound by residues arginine 165, leucine 195, 218–220 (GSE), 238–240 (IPM), and 247–252 (LNVSVS).

It belongs to the class IV-like SAM-binding methyltransferase superfamily. RNA methyltransferase TsnR/AvirB family. As to quaternary structure, homodimer.

The enzyme catalyses adenosine(1067) in 23S rRNA + S-adenosyl-L-methionine = 2'-O-methyladenosine(1067) in 23S rRNA + S-adenosyl-L-homocysteine + H(+). Its function is as follows. Specifically methylates the adenosine-1067 in 23S ribosomal RNA. Confers resistance to antibiotic nosiheptide. The polypeptide is 23S rRNA (adenosine(1067)-2'-O)-methyltransferase (Streptomyces actuosus).